Reading from the N-terminus, the 298-residue chain is Sulfate adenylyltransferase subunit 2 (298 aa).

Composition is skewed to basic and acidic residues over residues 272 to 282 (RTSERQGRLID) and 289 to 298 (MEKKKQEGYF). A disordered region spans residues 272–298 (RTSERQGRLIDSDSAGSMEKKKQEGYF).

It belongs to the PAPS reductase family. CysD subfamily. In terms of assembly, heterodimer composed of CysD, the smaller subunit, and CysN.

The catalysed reaction is sulfate + ATP + H(+) = adenosine 5'-phosphosulfate + diphosphate. It functions in the pathway sulfur metabolism; hydrogen sulfide biosynthesis; sulfite from sulfate: step 1/3. Functionally, with CysN forms the ATP sulfurylase (ATPS) that catalyzes the adenylation of sulfate producing adenosine 5'-phosphosulfate (APS) and diphosphate, the first enzymatic step in sulfur assimilation pathway. APS synthesis involves the formation of a high-energy phosphoric-sulfuric acid anhydride bond driven by GTP hydrolysis by CysN coupled to ATP hydrolysis by CysD. This is Sulfate adenylyltransferase subunit 2 from Burkholderia lata (strain ATCC 17760 / DSM 23089 / LMG 22485 / NCIMB 9086 / R18194 / 383).